The chain runs to 231 residues: U1 small nuclear ribonucleoprotein C (231 aa).

The Matrin-type zinc-finger motif lies at 4-36 (YYCEYCHSYLTHDTLSVRKSHLVGKNHLRITAD). Residues 49 to 61 (HNHKRRHIGKRGR) are compositionally biased toward basic residues. Disordered stretches follow at residues 49–71 (HNHKRRHIGKRGRKERENSSQNE), 137–177 (PQRA…LEPP), and 205–231 (ESKKRMHSDGIRKPSSANGYKRRRYGN).

The protein belongs to the U1 small nuclear ribonucleoprotein C family. As to quaternary structure, U1 snRNP is composed of the 7 core Sm proteins SMB1, SMD1, SMD2, SMD3, SME1, SMX3 and SMX2 (Sm proteins B, D1, D2, D3, E, F and G, respectively) that assemble in a heptameric protein ring on the Sm site of the small nuclear RNA to form the core snRNP, and at least 10 U1 snRNP-specific proteins SNP1/U1-70K, MUD1/U1-A, YHC1/U1-C, LUC7, NAM8, PRP39, PRP40, PRP42, SNU56 and SNU71. YHC1/U1-C interacts with U1 snRNA and the 5' splice-site region of the pre-mRNA.

The protein localises to the nucleus. Component of the spliceosomal U1 snRNP, which is essential for recognition of the pre-mRNA 5' splice-site and the subsequent assembly of the spliceosome. YHC1/U1-C is directly involved in initial 5' splice-site recognition for both constitutive and regulated alternative splicing. The interaction with the 5' splice-site seems to precede base-pairing between the pre-mRNA and the U1 snRNA. Stimulates commitment or early (E) complex formation by stabilizing the base pairing of the 5' end of the U1 snRNA and the 5' splice-site region. The protein is U1 small nuclear ribonucleoprotein C of Saccharomyces cerevisiae (strain ATCC 204508 / S288c) (Baker's yeast).